Here is a 376-residue protein sequence, read N- to C-terminus: 5-amino-6-(D-ribitylamino)uracil--L-tyrosine 4-hydroxyphenyl transferase 1 (376 aa).

In terms of domain architecture, Radical SAM core spans 50–284 (VTYVVNRNIN…AISRILLHGH (235 aa)). Positions 64, 68, and 71 each coordinate [4Fe-4S] cluster.

The protein belongs to the radical SAM superfamily. CofH family. Consists of two subunits, CofG and CofH. Requires [4Fe-4S] cluster as cofactor.

It carries out the reaction 5-amino-6-(D-ribitylamino)uracil + L-tyrosine + S-adenosyl-L-methionine = 5-amino-5-(4-hydroxybenzyl)-6-(D-ribitylimino)-5,6-dihydrouracil + 2-iminoacetate + 5'-deoxyadenosine + L-methionine + H(+). The protein operates within cofactor biosynthesis; coenzyme F0 biosynthesis. In terms of biological role, catalyzes the radical-mediated synthesis of 5-amino-5-(4-hydroxybenzyl)-6-(D-ribitylimino)-5,6-dihydrouracil from 5-amino-6-(D-ribitylamino)uracil and L-tyrosine. This is 5-amino-6-(D-ribitylamino)uracil--L-tyrosine 4-hydroxyphenyl transferase 1 from Methanosarcina barkeri (strain Fusaro / DSM 804).